The primary structure comprises 325 residues: Thioredoxin reductase (325 aa).

Residues 10 to 13 (SGPS), 39 to 40 (IA), Gln44, Asn53, Val86, Cys143, Asp286, and 293 to 295 (RQA) each bind FAD. A disulfide bond links Cys140 and Cys143.

Belongs to the class-II pyridine nucleotide-disulfide oxidoreductase family. In terms of assembly, homodimer. FAD serves as cofactor.

It is found in the cytoplasm. It catalyses the reaction [thioredoxin]-dithiol + NADP(+) = [thioredoxin]-disulfide + NADPH + H(+). This is Thioredoxin reductase (TRR1) from Pneumocystis carinii.